We begin with the raw amino-acid sequence, 315 residues long: Ribose-phosphate pyrophosphokinase (315 aa).

ATP-binding positions include 37-39 (DGE) and 96-97 (RQ). 2 residues coordinate Mg(2+): His131 and Asp170. Lys194 is a catalytic residue. D-ribose 5-phosphate contacts are provided by residues Arg196, Asp220, and 224-228 (DTGGT).

It belongs to the ribose-phosphate pyrophosphokinase family. Class I subfamily. Homohexamer. The cofactor is Mg(2+).

Its subcellular location is the cytoplasm. It carries out the reaction D-ribose 5-phosphate + ATP = 5-phospho-alpha-D-ribose 1-diphosphate + AMP + H(+). It functions in the pathway metabolic intermediate biosynthesis; 5-phospho-alpha-D-ribose 1-diphosphate biosynthesis; 5-phospho-alpha-D-ribose 1-diphosphate from D-ribose 5-phosphate (route I): step 1/1. Functionally, involved in the biosynthesis of the central metabolite phospho-alpha-D-ribosyl-1-pyrophosphate (PRPP) via the transfer of pyrophosphoryl group from ATP to 1-hydroxyl of ribose-5-phosphate (Rib-5-P). This is Ribose-phosphate pyrophosphokinase from Buchnera aphidicola subsp. Acyrthosiphon pisum (strain APS) (Acyrthosiphon pisum symbiotic bacterium).